The following is a 563-amino-acid chain: TSET complex member tstC (563 aa).

Disordered stretches follow at residues 146 to 170 (SPHQ…SFIT), 192 to 213 (NSLS…NNDS), 235 to 298 (VLNS…NYNN), 376 to 395 (HPNA…NEFK), and 428 to 563 (GSAS…FLNF). A compositionally biased stretch (basic and acidic residues) spans 379 to 395 (AGKEAKEKEKEKENEFK). A compositionally biased stretch (low complexity) spans 428-459 (GSASSKSSPSTSPLSSSYNPSSPETSENSFSA). The segment covering 460 to 473 (TPISDSNSLKNSID) has biased composition (polar residues). Low complexity-rich tracts occupy residues 474–487 (NNNN…NNNN) and 507–543 (NNSK…SSAA). The span at 552–563 (NSAKTKMNFLNF) shows a compositional bias: polar residues.

As to quaternary structure, component of the TSET complex, a heterohexamer composed of tstA, tstB, tstC, tstD, tstE and tstF, which may act in plasma membrane turnover. tstA, tstB, tstC and tstD are likely to be the core complex members with tstE and tstF acting as associated scaffold proteins.

This is TSET complex member tstC from Dictyostelium discoideum (Social amoeba).